Reading from the N-terminus, the 487-residue chain is Sodium-coupled neutral amino acid symporter 1 (487 aa).

At 1-74 (MMHFKSGLEL…EYIPGTTSLG (74 aa)) the chain is on the cytoplasmic side. Residue S6 is modified to Phosphoserine. T11 is modified (phosphothreonine). Phosphoserine is present on residues S25, S28, S49, and S52. T54 carries the phosphothreonine modification. S56 carries the phosphoserine modification. The helical transmembrane segment at 75-97 (MSVFNLSNAIMGSGILGLAFALA) threads the bilayer. At 98–112 (NTGILLFLVLLTSVT) the chain is on the extracellular side. Residues 113–133 (LLSIYSINLLLICSKETGCMV) traverse the membrane as a helical segment. Over 134-147 (YEKLGEQVFGTTGK) the chain is Cytoplasmic. Residues 148-168 (FVIFGATSLQNTGAMLSYLFI) form a helical membrane-spanning segment. At 169–188 (VKNELPSAIKFLMGKEETFS) the chain is on the extracellular side. Residues 189 to 211 (AWYVDGRVLVVIVTFGIILPLCL) traverse the membrane as a helical segment. The Cytoplasmic portion of the chain corresponds to 212–216 (LKNLG). Residues 217 to 237 (YLGYTSGFSLSCMVFFLIVVI) traverse the membrane as a helical segment. Residues 238–275 (YKKFQIPCIVPELNSTISANSTNADTCTPKYVTFNSKT) are Extracellular-facing. C245 and C264 are joined by a disulfide. N-linked (GlcNAc...) asparagine glycosylation is found at N251 and N257. The helical transmembrane segment at 276–296 (VYALPTIAFAFVCHPSVLPIY) threads the bilayer. Residues 297–312 (SELKDRSQKKMQMVSN) lie on the Cytoplasmic side of the membrane. The chain crosses the membrane as a helical span at residues 313–333 (ISFFAMFVMYFLTAIFGYLTF). Topologically, residues 334-350 (YDNVQSDLLHKYQSKDD) are extracellular. Residues 351-371 (ILILTVRLAVIVAVILTVPVL) form a helical membrane-spanning segment. Over 372–393 (FFTVRSSLFELAKKTKFNLCRH) the chain is Cytoplasmic. A helical transmembrane segment spans residues 394-414 (TVVTCILLVVINLLVIFIPSM). The Extracellular segment spans residues 415-416 (KD). Residues 417–437 (IFGVVGVTSANMLIFILPSSL) form a helical membrane-spanning segment. Residues 438–452 (YLKITDQDGDKGTQR) lie on the Cytoplasmic side of the membrane. The helical transmembrane segment at 453–473 (IWAALFLGLGVLFSLVSIPLV) threads the bilayer. Over 474–487 (IYDWACSSSSDEGH) the chain is Extracellular.

This sequence belongs to the amino acid/polyamine transporter 2 family. In terms of processing, N-glycosylation plays an important role in the L-glutamine transport. Expressed in the cerebral cortex by pyramidal and GABAergic neurons, astrocytes and other non-neuronal cells (at protein level). Expressed in placenta, heart, lung, skeletal muscle, spleen, stomach and testis. Highly expressed in cytotrophoblast cells from term placenta.

Its subcellular location is the cell membrane. It carries out the reaction L-glutamine(in) + Na(+)(in) = L-glutamine(out) + Na(+)(out). The enzyme catalyses L-alanine(in) + Na(+)(in) = L-alanine(out) + Na(+)(out). It catalyses the reaction L-asparagine(in) + Na(+)(in) = L-asparagine(out) + Na(+)(out). The catalysed reaction is L-histidine(in) + Na(+)(in) = L-histidine(out) + Na(+)(out). It carries out the reaction L-serine(in) + Na(+)(in) = L-serine(out) + Na(+)(out). The enzyme catalyses L-cysteine(in) + Na(+)(in) = L-cysteine(out) + Na(+)(out). It catalyses the reaction L-methionine(in) + Na(+)(in) = L-methionine(out) + Na(+)(out). The catalysed reaction is glycine(in) + Na(+)(in) = glycine(out) + Na(+)(out). It carries out the reaction L-threonine(in) + Na(+)(in) = L-threonine(out) + Na(+)(out). The enzyme catalyses L-proline(in) + Na(+)(in) = L-proline(out) + Na(+)(out). Its activity is regulated as follows. Inhibited by alpha-(methylamino)isobutyric acid (MeAIB). Inhibited by lithium, potassium, choline ions, N-methylglucamine. The pH dependence has an allosteric effect on the transport. Its function is as follows. Symporter that cotransports short-chain neutral amino acids and sodium ions from the extraccellular to the intracellular side of the cell membrane. The transport is elctrogenic, pH dependent and driven by the Na(+) electrochemical gradient. Participates in the astroglia-derived glutamine transport into GABAergic interneurons for neurotransmitter GABA de novo synthesis. May also contributes to amino acid transport in placental trophoblasts. Also regulates synaptic plasticity. This is Sodium-coupled neutral amino acid symporter 1 (SLC38A1) from Homo sapiens (Human).